The following is a 396-amino-acid chain: Probable glucan endo-1,6-beta-glucosidase B (396 aa).

An N-terminal signal peptide occupies residues 1-17; that stretch reads MIRRLAAFSALSGLATA. A glycan (N-linked (GlcNAc...) asparagine) is linked at N30. The active-site Proton donor is E219. N272 carries N-linked (GlcNAc...) asparagine glycosylation. The active-site Nucleophile is E320.

Belongs to the glycosyl hydrolase 5 (cellulase A) family.

It localises to the secreted. It carries out the reaction Random hydrolysis of (1-&gt;6)-linkages in (1-&gt;6)-beta-D-glucans.. Its function is as follows. Beta-glucanases participate in the metabolism of beta-glucan, the main structural component of the cell wall. Acts on lutean, pustulan and 1,6-oligo-beta-D-glucosides. This chain is Probable glucan endo-1,6-beta-glucosidase B (exgB), found in Aspergillus fumigatus (strain ATCC MYA-4609 / CBS 101355 / FGSC A1100 / Af293) (Neosartorya fumigata).